The chain runs to 428 residues: 3-phosphoshikimate 1-carboxyvinyltransferase (428 aa).

3 residues coordinate 3-phosphoshikimate: Lys-22, Ser-23, and Arg-27. Lys-22 provides a ligand contact to phosphoenolpyruvate. Gly-94 and Arg-122 together coordinate phosphoenolpyruvate. The 3-phosphoshikimate site is built by Ser-167, Gln-169, Asp-314, and Lys-341. Gln-169 contacts phosphoenolpyruvate. Asp-314 (proton acceptor) is an active-site residue. The phosphoenolpyruvate site is built by Arg-345 and Arg-387.

The protein belongs to the EPSP synthase family. In terms of assembly, monomer.

It is found in the cytoplasm. The catalysed reaction is 3-phosphoshikimate + phosphoenolpyruvate = 5-O-(1-carboxyvinyl)-3-phosphoshikimate + phosphate. It participates in metabolic intermediate biosynthesis; chorismate biosynthesis; chorismate from D-erythrose 4-phosphate and phosphoenolpyruvate: step 6/7. Catalyzes the transfer of the enolpyruvyl moiety of phosphoenolpyruvate (PEP) to the 5-hydroxyl of shikimate-3-phosphate (S3P) to produce enolpyruvyl shikimate-3-phosphate and inorganic phosphate. In Geotalea uraniireducens (strain Rf4) (Geobacter uraniireducens), this protein is 3-phosphoshikimate 1-carboxyvinyltransferase.